The chain runs to 116 residues: Ribonuclease P protein component (116 aa).

It belongs to the RnpA family. Consists of a catalytic RNA component (M1 or rnpB) and a protein subunit.

It carries out the reaction Endonucleolytic cleavage of RNA, removing 5'-extranucleotides from tRNA precursor.. Functionally, RNaseP catalyzes the removal of the 5'-leader sequence from pre-tRNA to produce the mature 5'-terminus. It can also cleave other RNA substrates such as 4.5S RNA. The protein component plays an auxiliary but essential role in vivo by binding to the 5'-leader sequence and broadening the substrate specificity of the ribozyme. The sequence is that of Ribonuclease P protein component from Carboxydothermus hydrogenoformans (strain ATCC BAA-161 / DSM 6008 / Z-2901).